Here is a 153-residue protein sequence, read N- to C-terminus: UPF0756 membrane protein Bcer98_3279 (153 aa).

The next 4 membrane-spanning stretches (helical) occupy residues 8-28, 54-74, 87-107, and 117-137; these read FLFI…IVAI, LGVT…EIGF, WIAL…LQLL, and LVFG…GPLI.

The protein belongs to the UPF0756 family.

The protein localises to the cell membrane. In Bacillus cytotoxicus (strain DSM 22905 / CIP 110041 / 391-98 / NVH 391-98), this protein is UPF0756 membrane protein Bcer98_3279.